A 467-amino-acid chain; its full sequence is Tripartite motif-containing protein 75 (467 aa).

The segment at 16–57 (CPICLDDLTDPVTVECGHNFCRSCIKDFWAGQQATSSCPVCR) adopts an RING-type zinc-finger fold. A B box-type zinc finger spans residues 90–131 (ESSTSCERHNQALTLFCEDDLQLLCDQCVEPESHGRHQVLSI). 4 residues coordinate Zn(2+): C95, H98, C117, and H123. Residues 168–222 (VTLREQAEAQRSQLTSECEKLMRFLDQEERAAFSRLEDEEMRLEKRLLDNIAALE) adopt a coiled-coil conformation. The region spanning 276–466 (YSFPLQYSAL…LRLCSATDSE (191 aa)) is the B30.2/SPRY domain.

Belongs to the TRIM/RBCC family.

The protein resides in the cytoplasm. It localises to the cytoskeleton. Its subcellular location is the spindle. Its function is as follows. May play a role in female meiosis. In Mus musculus (Mouse), this protein is Tripartite motif-containing protein 75.